The sequence spans 251 residues: CDP-diacylglycerol pyrophosphatase (251 aa).

A helical membrane pass occupies residues 4–24; that stretch reads AGLLFLVMIVIAVVASGIGYW.

It belongs to the Cdh family.

Its subcellular location is the cell inner membrane. The enzyme catalyses a CDP-1,2-diacyl-sn-glycerol + H2O = a 1,2-diacyl-sn-glycero-3-phosphate + CMP + 2 H(+). The protein operates within phospholipid metabolism; CDP-diacylglycerol degradation; phosphatidate from CDP-diacylglycerol: step 1/1. The sequence is that of CDP-diacylglycerol pyrophosphatase from Escherichia coli O8 (strain IAI1).